Here is a 1494-residue protein sequence, read N- to C-terminus: B-cell CLL/lymphoma 9-like protein (1494 aa).

Disordered regions lie at residues Met1–Gln236 and Val269–Gln496. Over residues Gly20–Pro37 the composition is skewed to pro residues. Phosphoserine is present on residues Ser21 and Ser25. Lys36 carries the post-translational modification N6-acetyllysine. 2 stretches are compositionally biased toward polar residues: residues Thr45 to Leu70 and Asn85 to Asn96. Ser88 is subject to Phosphoserine. Residues Lys108 and Lys110 each carry the N6-acetyllysine modification. Composition is skewed to basic and acidic residues over residues Glu114–Glu126 and Ser134–Gln153. Phosphoserine is present on residues Ser116 and Ser118. Lys137 carries the post-translational modification N6-acetyllysine. Over residues Pro193–Pro207 the composition is skewed to polar residues. Pro residues-rich tracts occupy residues Lys279–Leu289 and Ser299–Gly322. Residues Pro302 to Arg530 form a necessary for interaction with CTNNB1 region. Low complexity predominate over residues Thr348–Asn360. Over residues Leu396–Leu418 the composition is skewed to basic and acidic residues. Position 421 is a phosphoserine (Ser421). Position 511 is a phosphothreonine (Thr511). At Arg677 the chain carries Asymmetric dimethylarginine. Phosphoserine occurs at positions 747, 810, 912, 923, 935, 939, 944, 972, 984, 988, 994, 1001, 1007, and 1014. Disordered regions lie at residues Arg905 to Ser1082 and Glu1113 to Pro1206. The segment covering Pro932–Gln957 has biased composition (polar residues). Positions Gln974–Lys993 are enriched in polar residues. Positions Gly1016–Asn1035 are enriched in polar residues. Low complexity predominate over residues Pro1046–Ser1059. The span at Gly1060–Ser1082 shows a compositional bias: polar residues. The span at Pro1119–Gly1129 shows a compositional bias: pro residues. Over residues Gly1133–His1143 the composition is skewed to polar residues. A compositionally biased stretch (pro residues) spans His1165–Thr1176. Lys1339 participates in a covalent cross-link: Glycyl lysine isopeptide (Lys-Gly) (interchain with G-Cter in SUMO2).

The protein belongs to the BCL9 family. As to quaternary structure, found in a complex with CDC73; CTNNB1 and PYGO1. Interacts with CTNNB1. Expressed in kidney, liver, lung, testis, brain, spleen, heart and skeletal muscle. Highly expressed in numerous colorectal tumors compared to corresponding non-cancerous tissues.

Its subcellular location is the nucleus. Functionally, transcriptional regulator that acts as an activator. Promotes beta-catenin transcriptional activity. Plays a role in tumorigenesis. Enhances the neoplastic transforming activity of CTNNB1. The chain is B-cell CLL/lymphoma 9-like protein (Bcl9l) from Mus musculus (Mouse).